The sequence spans 197 residues: CASP-like protein 0U1 (197 aa).

Residues 1–13 are Cytoplasmic-facing; the sequence is MDDFDPTVTNSPK. Residues 14-34 form a helical membrane-spanning segment; the sequence is FRLIAVQCLFSITAFAAMLSQ. Residues 35-63 lie on the Extracellular side of the membrane; the sequence is RHGLAGPDEMTLEECGPQACGYQKFSNFK. Residues 64–84 form a helical membrane-spanning segment; sequence FLIAVCIIYAVFSLVVMAAYL. Residues 85 to 99 are Cytoplasmic-facing; sequence LQRVPPPVTELTAYT. A helical transmembrane segment spans residues 100 to 120; that stretch reads VMNVLLFAAFAMSATSCNITI. Residues 121–135 are Extracellular-facing; the sequence is VDPVYPVCKRATSAK. The helical transmembrane segment at 136–156 threads the bilayer; it reads ASIAFAFFTWLAVCFSMLFTY. Residues 157 to 197 lie on the Cytoplasmic side of the membrane; it reads KEWRDVDYHVPGSGAYEFVPGVTSGSSRSSYPPQASSSSYA. The segment at 178–197 is disordered; sequence VTSGSSRSSYPPQASSSSYA. Residues 180-197 show a composition bias toward low complexity; sequence SGSSRSSYPPQASSSSYA.

Belongs to the Casparian strip membrane proteins (CASP) family. Homodimer and heterodimers.

Its subcellular location is the cell membrane. This chain is CASP-like protein 0U1, found in Micromonas commoda (strain RCC299 / NOUM17 / CCMP2709) (Picoplanktonic green alga).